The chain runs to 355 residues: S-adenosylmethionine:tRNA ribosyltransferase-isomerase (355 aa).

Belongs to the QueA family. Monomer.

Its subcellular location is the cytoplasm. It catalyses the reaction 7-aminomethyl-7-carbaguanosine(34) in tRNA + S-adenosyl-L-methionine = epoxyqueuosine(34) in tRNA + adenine + L-methionine + 2 H(+). The protein operates within tRNA modification; tRNA-queuosine biosynthesis. In terms of biological role, transfers and isomerizes the ribose moiety from AdoMet to the 7-aminomethyl group of 7-deazaguanine (preQ1-tRNA) to give epoxyqueuosine (oQ-tRNA). This Aeromonas hydrophila subsp. hydrophila (strain ATCC 7966 / DSM 30187 / BCRC 13018 / CCUG 14551 / JCM 1027 / KCTC 2358 / NCIMB 9240 / NCTC 8049) protein is S-adenosylmethionine:tRNA ribosyltransferase-isomerase.